The sequence spans 406 residues: DNA repair protein RAD55 (406 aa).

43–50 contributes to the ATP binding site; the sequence is GPPGIGKT. The interval 385–406 is disordered; that stretch reads DSNDNPLPNAEGKEEIIYDSEG.

It belongs to the RecA family. RAD55 subfamily.

Its subcellular location is the nucleus. Functionally, required for radiation resistance and meiotic viability and presumably acts in recombination and recombinational DNA repair pathways. This Saccharomyces cerevisiae (strain ATCC 204508 / S288c) (Baker's yeast) protein is DNA repair protein RAD55 (RAD55).